The primary structure comprises 105 residues: Sec-independent protein translocase protein TatA (105 aa).

The helical transmembrane segment at 1–21 threads the bilayer; it reads MSLGPWEIGIIVLLIIVLFGA. Positions 41–50 are enriched in basic and acidic residues; that stretch reads EVKEMNKDGD. The segment at 41–105 is disordered; sequence EVKEMNKDGD…QNYEDPNRTS (65 aa). Over residues 52–92 the composition is skewed to low complexity; sequence PEQQQQPQQQIAPNQIEAPQPNFEQHYQGQQVQQPQNPQTP. The span at 96-105 shows a compositional bias: basic and acidic residues; it reads QNYEDPNRTS.

It belongs to the TatA/E family. The Tat system comprises two distinct complexes: a TatABC complex, containing multiple copies of TatA, TatB and TatC subunits, and a separate TatA complex, containing only TatA subunits. Substrates initially bind to the TatABC complex, which probably triggers association of the separate TatA complex to form the active translocon.

It is found in the cell membrane. Functionally, part of the twin-arginine translocation (Tat) system that transports large folded proteins containing a characteristic twin-arginine motif in their signal peptide across membranes. TatA could form the protein-conducting channel of the Tat system. The chain is Sec-independent protein translocase protein TatA from Corynebacterium glutamicum (strain ATCC 13032 / DSM 20300 / JCM 1318 / BCRC 11384 / CCUG 27702 / LMG 3730 / NBRC 12168 / NCIMB 10025 / NRRL B-2784 / 534).